Here is a 261-residue protein sequence, read N- to C-terminus: Probable electron transfer flavoprotein subunit beta (261 aa).

Residue S2 is modified to N-acetylserine.

Belongs to the ETF beta-subunit/FixA family. In terms of assembly, heterodimer of an alpha and a beta subunit. Interacts with YFH1. FAD is required as a cofactor. It depends on AMP as a cofactor.

It is found in the mitochondrion matrix. Functionally, the electron transfer flavoprotein serves as a specific electron acceptor for several dehydrogenases, including five acyl-CoA dehydrogenases, glutaryl-CoA and sarcosine dehydrogenase. It transfers the electrons to the main mitochondrial respiratory chain via ETF-ubiquinone oxidoreductase (ETF dehydrogenase). The chain is Probable electron transfer flavoprotein subunit beta (CIR1) from Saccharomyces cerevisiae (strain ATCC 204508 / S288c) (Baker's yeast).